Here is a 341-residue protein sequence, read N- to C-terminus: Uroporphyrinogen decarboxylase (341 aa).

Residues 25–29 (RQAGR), F44, D74, Y151, S206, and H318 each bind substrate.

Belongs to the uroporphyrinogen decarboxylase family. In terms of assembly, homodimer.

Its subcellular location is the cytoplasm. It carries out the reaction uroporphyrinogen III + 4 H(+) = coproporphyrinogen III + 4 CO2. The protein operates within porphyrin-containing compound metabolism; protoporphyrin-IX biosynthesis; coproporphyrinogen-III from 5-aminolevulinate: step 4/4. Functionally, catalyzes the decarboxylation of four acetate groups of uroporphyrinogen-III to yield coproporphyrinogen-III. The polypeptide is Uroporphyrinogen decarboxylase (Flavobacterium johnsoniae (strain ATCC 17061 / DSM 2064 / JCM 8514 / BCRC 14874 / CCUG 350202 / NBRC 14942 / NCIMB 11054 / UW101) (Cytophaga johnsonae)).